The primary structure comprises 272 residues: Cytochrome b-c1 complex subunit Rieske, mitochondrial (272 aa).

At 77-104 the chain is on the mitochondrial matrix side; it reads VHNDVTVPDFSAYRREDVMDATTSSQTS. Residues 105–138 form a helical membrane-spanning segment; the sequence is SEDRKGFSYLVTATACVATAYAAKNVVTQFISSL. Over 139–272 the chain is Mitochondrial intermembrane; it reads SASADVLALS…FVGDDLVVVG (134 aa). A Rieske domain is found at 185–270; that stretch reads EAEVDVSKLR…YQFVGDDLVV (86 aa). Positions 215, 217, 218, 234, 237, and 239 each coordinate [2Fe-2S] cluster. C220 and C236 are disulfide-bonded.

Belongs to the Rieske iron-sulfur protein family. As to quaternary structure, component of the ubiquinol-cytochrome c oxidoreductase (cytochrome b-c1 complex, complex III, CIII), a multisubunit enzyme composed of 11 subunits. The complex is composed of 3 respiratory subunits cytochrome b, cytochrome c1 and Rieske protein UQCRFS1, 2 core protein subunits UQCRC1/QCR1 and UQCRC2/QCR2, and 6 low-molecular weight protein subunits UQCRH/QCR6, UQCRB/QCR7, UQCRQ/QCR8, UQCR10/QCR9, UQCR11/QCR10 and subunit 9, the cleavage product of Rieske protein UQCRFS1. The complex exists as an obligatory dimer and forms supercomplexes (SCs) in the inner mitochondrial membrane with NADH-ubiquinone oxidoreductase (complex I, CI) and cytochrome c oxidase (complex IV, CIV), resulting in different assemblies (supercomplex SCI(1)III(2)IV(1) and megacomplex MCI(2)III(2)IV(2)). Incorporation of the Rieske protein UQCRFS1 is the penultimate step in complex III assembly. Interacts with TTC19, which is involved in the clearance of UQCRFS1 fragments. In terms of assembly, component of the ubiquinol-cytochrome c oxidoreductase (cytochrome b-c1 complex, complex III, CIII). Subunit 9 corresponds to the mitochondrial targeting sequence (MTS) of Rieske protein UQCRFS1. It is retained after processing and incorporated inside complex III, where it remains bound to the complex and localizes between the 2 core subunits UQCRC1/QCR1 and UQCRC2/QCR2. It depends on [2Fe-2S] cluster as a cofactor. In terms of processing, proteolytic processing is necessary for the correct insertion of UQCRFS1 in the complex III dimer. Several fragments are generated during UQCRFS1 insertion, most probably due to the endogenous matrix-processing peptidase (MPP) activity of the 2 core protein subunits UQCRC1/QCR1 and UQCRC2/QCR2, which are homologous to the 2 mitochondrial-processing peptidase (MPP) subunits beta-MPP and alpha-MPP respectively. The action of the protease is also necessary for the clearance of the UQCRFS1 fragments.

The protein localises to the mitochondrion inner membrane. It carries out the reaction a quinol + 2 Fe(III)-[cytochrome c](out) = a quinone + 2 Fe(II)-[cytochrome c](out) + 2 H(+)(out). Functionally, component of the ubiquinol-cytochrome c oxidoreductase, a multisubunit transmembrane complex that is part of the mitochondrial electron transport chain which drives oxidative phosphorylation. The respiratory chain contains 3 multisubunit complexes succinate dehydrogenase (complex II, CII), ubiquinol-cytochrome c oxidoreductase (cytochrome b-c1 complex, complex III, CIII) and cytochrome c oxidase (complex IV, CIV), that cooperate to transfer electrons derived from NADH and succinate to molecular oxygen, creating an electrochemical gradient over the inner membrane that drives transmembrane transport and the ATP synthase. The cytochrome b-c1 complex catalyzes electron transfer from ubiquinol to cytochrome c, linking this redox reaction to translocation of protons across the mitochondrial inner membrane, with protons being carried across the membrane as hydrogens on the quinol. In the process called Q cycle, 2 protons are consumed from the matrix, 4 protons are released into the intermembrane space and 2 electrons are passed to cytochrome c. The Rieske protein is a catalytic core subunit containing a [2Fe-2S] iron-sulfur cluster. It cycles between 2 conformational states during catalysis to transfer electrons from the quinol bound in the Q(0) site in cytochrome b to cytochrome c1. Incorporation of UQCRFS1 is the penultimate step in complex III assembly. Component of the ubiquinol-cytochrome c oxidoreductase (cytochrome b-c1 complex, complex III, CIII). UQCRFS1 undergoes proteolytic processing once it is incorporated in the complex III dimer. One of the fragments, called subunit 9, corresponds to its mitochondrial targeting sequence (MTS). The proteolytic processing is necessary for the correct insertion of UQCRFS1 in the complex III dimer, but the persistence of UQCRFS1-derived fragments may prevent newly imported UQCRFS1 to be processed and assembled into complex III and is detrimental for the complex III structure and function. This Gallus gallus (Chicken) protein is Cytochrome b-c1 complex subunit Rieske, mitochondrial (UQCRFS1).